Here is an 808-residue protein sequence, read N- to C-terminus: Zinc finger protein 148 (808 aa).

Disordered stretches follow at residues 15–86 (SPVG…ISQD) and 131–162 (DSLI…SPAK). Residues 56–73 (AEDDDDEDEEEDDDDDLA) show a composition bias toward acidic residues. Over residues 150 to 159 (HKKKKRKQRS) the composition is skewed to basic residues. 4 C2H2-type zinc fingers span residues 180–202 (HICE…VFIH), 208–230 (FQCN…EKIH), 236–258 (FRCD…KRTH), and 264–287 (YQCD…RMCH). Disordered regions lie at residues 305–338 (RTPE…ASIT), 596–617 (SINS…QAPP), and 705–736 (SFSG…DPQS). 2 stretches are compositionally biased toward polar residues: residues 705 to 718 (SFSG…SVSP) and 725 to 736 (QVTSPKKTDPQS).

This sequence belongs to the krueppel C2H2-type zinc-finger protein family.

It is found in the nucleus. Its function is as follows. Involved in transcriptional regulation. Represses the transcription of a number of genes. Required for primitive and definitive hematopoiesis during embryonic development. The sequence is that of Zinc finger protein 148 (znf148) from Danio rerio (Zebrafish).